The following is a 309-amino-acid chain: Mitochondrial succinate-fumarate transporter 1 (309 aa).

3 Solcar repeats span residues I11–A96, R108–L196, and L208–L298. Helical transmembrane passes span A17–I37, V65–L85, F111–V131, G171–N191, M214–V234, and G273–D293.

The protein belongs to the mitochondrial carrier (TC 2.A.29) family. In terms of tissue distribution, expressed in root tips, cotyledons, hypocotyls, leaves, trichomes, stems, flowers, carpels, anthers, pollen and abscission zone of siliques.

Its subcellular location is the mitochondrion inner membrane. May transport cytoplasmic succinate, derived from fatty acid oxidation, into the mitochondrial matrix in exchange of fumarate during lipid mobilization in seed germination. Conversion of seed-reserved triacylglycerols into sucrose is necessary for growth before the onset of photosynthesis and involves fatty acid beta-oxidation, the glyoxylate cycle and gluconeogenesis. This Arabidopsis thaliana (Mouse-ear cress) protein is Mitochondrial succinate-fumarate transporter 1 (SFC1).